The sequence spans 420 residues: Ammonium transporter Amt2 (420 aa).

A run of 11 helical transmembrane segments spans residues 34 to 54 (VFFL…FAML), 71 to 91 (NMVD…ILCS), 120 to 140 (SWFF…GGVA), 149 to 169 (VLIS…LGPW), 180 to 200 (AGSL…IAAL), 220 to 240 (IPMA…FNVG), 250 to 270 (GLVC…ALIA), 273 to 293 (NDVL…CSGT), 295 to 315 (VVSP…VPIV), 339 to 359 (VIGA…AGGV), and 365 to 385 (IIGA…LAKI).

This sequence belongs to the ammonia transporter channel (TC 1.A.11.2) family. As to quaternary structure, homotrimer. Interacts and forms a complex with GlnK2.

It is found in the cell membrane. Functionally, involved in the uptake of ammonium/ammonia (NH(4)(+)/NH(3)). Transport is electrogenic. The sequence is that of Ammonium transporter Amt2 from Methanocaldococcus jannaschii (strain ATCC 43067 / DSM 2661 / JAL-1 / JCM 10045 / NBRC 100440) (Methanococcus jannaschii).